The following is a 1398-amino-acid chain: DNA-directed RNA polymerase subunit beta' (1398 aa).

Cysteine 71, cysteine 73, cysteine 86, and cysteine 89 together coordinate Zn(2+). The Mg(2+) site is built by aspartate 462, aspartate 464, and aspartate 466. Zn(2+) contacts are provided by cysteine 810, cysteine 883, cysteine 890, and cysteine 893. Residues 1377–1398 (EKQAAVVSPAPEAELPALPPAE) are disordered. The segment covering 1380–1392 (AAVVSPAPEAELP) has biased composition (low complexity).

Belongs to the RNA polymerase beta' chain family. The RNAP catalytic core consists of 2 alpha, 1 beta, 1 beta' and 1 omega subunit. When a sigma factor is associated with the core the holoenzyme is formed, which can initiate transcription. It depends on Mg(2+) as a cofactor. Zn(2+) serves as cofactor.

The enzyme catalyses RNA(n) + a ribonucleoside 5'-triphosphate = RNA(n+1) + diphosphate. DNA-dependent RNA polymerase catalyzes the transcription of DNA into RNA using the four ribonucleoside triphosphates as substrates. The chain is DNA-directed RNA polymerase subunit beta' from Bradyrhizobium diazoefficiens (strain JCM 10833 / BCRC 13528 / IAM 13628 / NBRC 14792 / USDA 110).